A 1249-amino-acid polypeptide reads, in one-letter code: MAGE-like protein 2 (1249 aa).

Polar residues predominate over residues 1–10 (MSQLSKNLGD). Disordered regions lie at residues 1 to 50 (MSQL…PPID), 134 to 233 (APGA…AQPP), 300 to 327 (QPPA…QPMA), 349 to 378 (PQVP…WQAT), 410 to 433 (RQGP…VRQA), 515 to 569 (QALP…LPAP), 647 to 679 (QPFQ…EVPT), 714 to 746 (LMTP…RAPS), 862 to 910 (PQAT…DWQG), and 930 to 957 (VSGD…ILSG). Composition is skewed to pro residues over residues 40-49 (PPVPWDPPPI) and 140-233 (AHPP…AQPP). Positions 301–311 (PPASGAPMAQP) are enriched in low complexity. Composition is skewed to pro residues over residues 312–324 (AAPP…PPAQ) and 349–358 (PQVPQGPQAP). The span at 369–378 (QATSPGWQAT) shows a compositional bias: polar residues. Positions 410–432 (RQGPPPIRPGPPPIRPGPPPVRQ) are enriched in pro residues. Residues 525–552 (QAPQARLPAPQVQAAPQVPTAPPATQVP) are compositionally biased toward low complexity. Positions 553 to 567 (AAPPAGPQVPQPVLP) are enriched in pro residues. A compositionally biased stretch (low complexity) spans 662-675 (QLPPQQAQASGPQA). Positions 725–746 (SIDRRGSSKERRTSSKERRAPS) are enriched in basic and acidic residues. The span at 862 to 871 (PQATATTQEA) shows a compositional bias: low complexity. Residues 881–891 (RSGKATRKKKH) are compositionally biased toward basic residues. The region spanning 1020–1219 (LDERANALVQ…QSWPFHYLEA (200 aa)) is the MAGE domain. Residues 1226-1235 (EDTDEDEPDT) show a composition bias toward acidic residues. Residues 1226–1249 (EDTDEDEPDTGDSAHGPTSRPPPR) are disordered.

As to quaternary structure, part of a complex consisting of MAGEL2, TRIM27 and USP7; directly interacts with USP7. Interacts with TRIM27. Interacts with VPS35; leading to recruitment at retromer-containing endosomes. Interacts with BMAL1 and PER2. Expressed in placenta, fetal and adult brain. Not detected in heart and small intestine, very low levels in fibroblasts. Not expressed in brain of a Prader-Willi patient.

The protein resides in the early endosome. Its subcellular location is the cytoplasm. The protein localises to the nucleus. Its function is as follows. Probably enhances ubiquitin ligase activity of RING-type zinc finger-containing E3 ubiquitin-protein ligases, possibly through recruitment and/or stabilization of the Ubl-conjugating enzyme (E2) at the E3:substrate complex. Acts as a regulator of retrograde transport via its interaction with VPS35. Recruited to retromer-containing endosomes and promotes the formation of 'Lys-63'-linked polyubiquitin chains at 'Lys-220' of WASHC1 together with TRIM27, leading to promote endosomal F-actin assembly. Regulates the circadian clock by repressing the transcriptional activator activity of the CLOCK-BMAL1 heterodimer. Significantly promotes the cytoplasmic accumulation of CLOCK. The protein is MAGE-like protein 2 (MAGEL2) of Homo sapiens (Human).